A 79-amino-acid chain; its full sequence is MASCCICIRPRHLPVTTVTIVTLSEERIRNVTHPQKPFQKTRSPAFVVQPMERAPLFEIGATRADTWPEGLIPRARSGP.

This is an uncharacterized protein from Rhizobium leguminosarum.